The sequence spans 154 residues: Superoxide dismutase [Cu-Zn] (154 aa).

His47, His49, and His64 together coordinate Cu cation. Residues Cys58 and Cys147 are joined by a disulfide bond. Zn(2+)-binding residues include His64, His72, His81, and Asp84. His121 contacts Cu cation. Arg144 contributes to the substrate binding site.

The protein belongs to the Cu-Zn superoxide dismutase family. As to quaternary structure, homodimer. The cofactor is Cu cation. Zn(2+) is required as a cofactor.

The protein localises to the cytoplasm. The catalysed reaction is 2 superoxide + 2 H(+) = H2O2 + O2. In terms of biological role, destroys radicals which are normally produced within the cells and which are toxic to biological systems. The protein is Superoxide dismutase [Cu-Zn] (sod1) of Schizosaccharomyces pombe (strain 972 / ATCC 24843) (Fission yeast).